A 273-amino-acid polypeptide reads, in one-letter code: MVDISMADVRLLRERLGVGVMDSRNALIEAGGDIERAVEILRLKGLKSAEKREGRSVSEGLVVSRQFATHAVLAELCCETDFVAKSDRFLALSEKVADLVSDADSLETALRVRCDEGSVADLIALEAAVLGENVALRRFARVEGSRFSVYMHRTSSDLPPQVGVILAYEGHDDATARFIAQHIAFAAPEYLSVGDIPQGILQRERDLLTEISRGEGKPEEVLPQIVEGRLVKLYKQNVLLEQDYVRDNKVTISKVLEATGLRVISFARFRVGT.

The segment at T80–V83 is involved in Mg(2+) ion dislocation from EF-Tu.

Belongs to the EF-Ts family.

It localises to the cytoplasm. Associates with the EF-Tu.GDP complex and induces the exchange of GDP to GTP. It remains bound to the aminoacyl-tRNA.EF-Tu.GTP complex up to the GTP hydrolysis stage on the ribosome. This Tropheryma whipplei (strain Twist) (Whipple's bacillus) protein is Elongation factor Ts.